Reading from the N-terminus, the 159-residue chain is MALTVAKSALEAIREKGLGGFMRMIREEGFMRCLPDGNLLQTKIHNIGATLVGVDKFGNKYYQKLGDTQYGRHRWVEYASKDRYNASQVPAEWHGWLHFITDHTGDELLSLKPKRYGLEHKENFSGEGDAYIYHSKGHTLNPGQKNWTRYQSWVPTKTQ.

The protein belongs to the complex I NDUFA12 subunit family. Complex I is composed of at least 49 different subunits.

The protein localises to the mitochondrion inner membrane. Functionally, accessory subunit of the mitochondrial membrane respiratory chain NADH dehydrogenase (Complex I), that is believed not to be involved in catalysis. Complex I functions in the transfer of electrons from NADH to the respiratory chain. The immediate electron acceptor for the enzyme is believed to be ubiquinone. The sequence is that of Probable NADH dehydrogenase [ubiquinone] 1 alpha subcomplex subunit 12 from Arabidopsis thaliana (Mouse-ear cress).